We begin with the raw amino-acid sequence, 777 residues long: MELGRAGPAGLLLLLLLLLAAQAAPERDPYRVLGVGRSSSQADIKKAYKRLARQWHPDKNKDPGAEDKFIQISKAYEILSNEEKRANFDRYGDAGESQGYSQHQQRQFHHFHEGFYFDESFFHFPFNSERRDTSDEKYLLHFSHYINEIVPDSFKKPYLIKITSDWCFSCIHIEPVWKEVAQELEALGVGIGVVHAGYERRLAHHLGAHSTPSILGLINGKITFFHSAVVRENLRQFVENLLPGNLVEKITDKNYIRFLSNWKKENKPHVLLFDHMPVVPLLYKLTAFAYRDYLSFGYVYVGLRGTEELSSQYNINVYTPTLMIFKEHIDKPADVAQARDMKKQLIDDFLSQNKFLMAARLTNQRLFQELCPVKKSHRQRKHCVVLLTGEGDKFADAYEAFLTFAVANTKDTLRFAHIYNDRQPEFADALLMDEEKYRGKSAVVILERRNNAGKIAYKTLEEAWQGSNEDNFILLDLLDQLRTDPGLLSSETVLADLNDELAPMFLIRWFYSTLDYILDCWDSLFHSNWREMMPLLSLLFSALFILFGTVIVQAFSDSSDTRDSPASEKKDTTAKTEKNDTSFNKESNSRVPKKGFVEVTELTDINYNSNLVRLRPGHMNVVLILSNSTKTALLQKFALEVYTFTGSSSLHFSFLSLDKHREWLEYLLEFAQDAAPIPNQYDKHFLERDYTGYVLALNGHKKYFCLFKPHRSGDEGGTLGACEDYDSSLHTEARGKSSCSPGSRSLKNKLHKLSFWMERLLEGSLQRFYIPSWPALD.

A signal peptide spans 1–23; the sequence is MELGRAGPAGLLLLLLLLLAAQA. Residues 24–531 are Cytoplasmic-facing; the sequence is APERDPYRVL…DSLFHSNWRE (508 aa). A J domain is found at 28–92; that stretch reads DPYRVLGVGR…EKRANFDRYG (65 aa). The region spanning 117–243 is the Thioredoxin domain; that stretch reads FDESFFHFPF…LRQFVENLLP (127 aa). Residues 532-552 traverse the membrane as a helical; Anchor for type IV membrane protein segment; sequence MMPLLSLLFSALFILFGTVIV. Residues 553 to 777 lie on the Extracellular side of the membrane; the sequence is QAFSDSSDTR…FYIPSWPALD (225 aa). The segment at 558–589 is disordered; the sequence is SSDTRDSPASEKKDTTAKTEKNDTSFNKESNS. Basic and acidic residues predominate over residues 559–580; that stretch reads SDTRDSPASEKKDTTAKTEKND. A glycan (N-linked (GlcNAc...) asparagine) is linked at asparagine 627.

It is found in the endoplasmic reticulum membrane. Plays an important role in regulating the size of autophagosomes during the formation process. This is DnaJ homolog subfamily C member 16 (DNAJC16) from Gallus gallus (Chicken).